We begin with the raw amino-acid sequence, 188 residues long: Augmin complex subunit dgt4 (188 aa).

A coiled-coil region spans residues 141 to 163 (QREFAQNQEALRSLRTAVDGLEN).

In terms of assembly, component of the augmin complex composed of dgt2, dgt3, dgt4, dgt5, dgt6, msd1, msd5 and wac. The complex interacts directly or indirectly with microtubules and is required for centrosome-independent generation of spindle microtubules.

The protein resides in the cytoplasm. The protein localises to the cytoskeleton. It localises to the spindle. As part of the augmin complex, plays a role in centrosome-independent generation of spindle microtubules. The complex is required for mitotic spindle assembly through its involvement in localizing gamma-tubulin to spindle microtubules. The polypeptide is Augmin complex subunit dgt4 (Drosophila melanogaster (Fruit fly)).